Here is an 898-residue protein sequence, read N- to C-terminus: Vacuolar membrane protease (898 aa).

Residues 1 to 14 (MGIVDYLVAAVSFR) lie on the Cytoplasmic side of the membrane. Residues 15 to 35 (TLPTTFVAVLVYLAIFISVLI) traverse the membrane as a helical segment. At 36–342 (TDELPATPKD…LFGQALIVFP (307 aa)) the chain is on the vacuolar side. Residues Asn-50, Asn-103, and Asn-110 are each glycosylated (N-linked (GlcNAc...) asparagine). Zn(2+)-binding residues include His-139 and Asp-151. The active-site Proton acceptor is the Glu-183. Glu-184 is a binding site for Zn(2+). An N-linked (GlcNAc...) asparagine glycan is attached at Asn-200. Zn(2+) contacts are provided by Glu-209 and His-284. A helical transmembrane segment spans residues 343–365 (LSAMITFNIVFLVVGPIMLALLV). The Cytoplasmic segment spans residues 366–411 (TFDIVARHRRQEMIGGGYEEQGFFARAWTSFKSFRWVGGFWKHAKF). Residues 412–432 (WVALAVTVGLQVLLCVGYLYI) form a helical membrane-spanning segment. Residue Asn-433 is a topological domain, vacuolar. The helical transmembrane segment at 434-454 (PLIAYSSSHIVLLSFLSLAYL) threads the bilayer. Residues 455–479 (STYLVHNIPSPTDTYGSHLPEQQKQ) lie on the Cytoplasmic side of the membrane. Residues 480 to 500 (AALFQLYFFTWILLLAATVVG) form a helical membrane-spanning segment. Over 501-509 (AKLSVGSFY) the chain is Vacuolar. The helical transmembrane segment at 510–530 (ILSLWNAVLFAACAIGSIAGL) threads the bilayer. At 531–593 (LSSHTVEGDA…PGGKEGEEVS (63 aa)) the chain is on the cytoplasmic side. The helical transmembrane segment at 594–614 (GAIGWWFVQFVLSVPAVVILV) threads the bilayer. Over 615-635 (SQLALLMLAATEQTLADGSPA) the chain is Vacuolar. Residues 636–656 (VTVYGGASLMSVLAILPLAPF) traverse the membrane as a helical segment. Residues 657–664 (ACKLHRRV) are Cytoplasmic-facing. Residues 665–685 (AYVALVVLIASTAYAWLVFPF) traverse the membrane as a helical segment. At 686 to 898 (SERAPLKVFF…LVEGYKAFAV (213 aa)) the chain is on the vacuolar side. 3 N-linked (GlcNAc...) asparagine glycosylation sites follow: Asn-704, Asn-733, and Asn-764.

The protein belongs to the peptidase M28 family. It depends on Zn(2+) as a cofactor.

The protein localises to the vacuole membrane. In terms of biological role, may be involved in vacuolar sorting and osmoregulation. The chain is Vacuolar membrane protease from Schizophyllum commune (strain H4-8 / FGSC 9210) (Split gill fungus).